A 227-amino-acid polypeptide reads, in one-letter code: H-2 class II histocompatibility antigen, A-U alpha chain (227 aa).

The interval 1 to 82 is alpha-1; that stretch reads DHVGSYGIVV…KRSNSTPATN (82 aa). At 1–189 the chain is on the extracellular side; sequence DHVGSYGIVV…IPAPMSELTE (189 aa). The interval 83–176 is alpha-2; that stretch reads EAPQATVFPK…GLEEPVLKHW (94 aa). Residues 85–177 form the Ig-like C1-type domain; the sequence is PQATVFPKSP…LEEPVLKHWE (93 aa). Cys-105 and Cys-161 form a disulfide bridge. N-linked (GlcNAc...) asparagine glycosylation occurs at Asn-116. The segment at 177–189 is connecting peptide; it reads EPEIPAPMSELTE. Residues 190–215 form a helical membrane-spanning segment; that stretch reads TVVCALGLSVGLVGIVVGTIFIIQGL. The Cytoplasmic segment spans residues 216–227; the sequence is RSGGTSRHPGPL.

The protein belongs to the MHC class II family.

It localises to the membrane. The sequence is that of H-2 class II histocompatibility antigen, A-U alpha chain (H2-Aa) from Mus musculus (Mouse).